Reading from the N-terminus, the 127-residue chain is Glycine cleavage system H protein (127 aa).

The region spanning Thr-24 to Ser-105 is the Lipoyl-binding domain. Lys-65 is subject to N6-lipoyllysine.

It belongs to the GcvH family. As to quaternary structure, the glycine cleavage system is composed of four proteins: P, T, L and H. It depends on (R)-lipoate as a cofactor.

The glycine cleavage system catalyzes the degradation of glycine. The H protein shuttles the methylamine group of glycine from the P protein to the T protein. The polypeptide is Glycine cleavage system H protein (Prosthecochloris aestuarii (strain DSM 271 / SK 413)).